We begin with the raw amino-acid sequence, 156 residues long: MNINATLIGQSVAFLIFVLFCMKFIWPPVIAALHERQKKIADGLDAASRAARDLELAQDKAGQQLREAKAQAAEIIEQAKKRGSQIVDEAREQARVEAERVKAQAQAEIEQELNGVKDALRAQLGSLAVNGAEKILGATIDQNAHAELVNKLAAEI.

A helical transmembrane segment spans residues 12–32 (VAFLIFVLFCMKFIWPPVIAA).

It belongs to the ATPase B chain family. As to quaternary structure, F-type ATPases have 2 components, F(1) - the catalytic core - and F(0) - the membrane proton channel. F(1) has five subunits: alpha(3), beta(3), gamma(1), delta(1), epsilon(1). F(0) has three main subunits: a(1), b(2) and c(10-14). The alpha and beta chains form an alternating ring which encloses part of the gamma chain. F(1) is attached to F(0) by a central stalk formed by the gamma and epsilon chains, while a peripheral stalk is formed by the delta and b chains.

It is found in the cell inner membrane. Functionally, f(1)F(0) ATP synthase produces ATP from ADP in the presence of a proton or sodium gradient. F-type ATPases consist of two structural domains, F(1) containing the extramembraneous catalytic core and F(0) containing the membrane proton channel, linked together by a central stalk and a peripheral stalk. During catalysis, ATP synthesis in the catalytic domain of F(1) is coupled via a rotary mechanism of the central stalk subunits to proton translocation. Its function is as follows. Component of the F(0) channel, it forms part of the peripheral stalk, linking F(1) to F(0). In Pseudomonas fluorescens (strain ATCC BAA-477 / NRRL B-23932 / Pf-5), this protein is ATP synthase subunit b.